We begin with the raw amino-acid sequence, 425 residues long: Enolase (425 aa).

Residue glutamine 162 participates in (2R)-2-phosphoglycerate binding. Glutamate 204 serves as the catalytic Proton donor. 3 residues coordinate Mg(2+): aspartate 241, glutamate 282, and aspartate 309. (2R)-2-phosphoglycerate-binding residues include lysine 334, arginine 363, serine 364, and lysine 385. Residue lysine 334 is the Proton acceptor of the active site.

This sequence belongs to the enolase family. Mg(2+) serves as cofactor.

Its subcellular location is the cytoplasm. The protein resides in the secreted. The protein localises to the cell surface. The catalysed reaction is (2R)-2-phosphoglycerate = phosphoenolpyruvate + H2O. Its pathway is carbohydrate degradation; glycolysis; pyruvate from D-glyceraldehyde 3-phosphate: step 4/5. Catalyzes the reversible conversion of 2-phosphoglycerate (2-PG) into phosphoenolpyruvate (PEP). It is essential for the degradation of carbohydrates via glycolysis. The protein is Enolase of Corynebacterium aurimucosum (strain ATCC 700975 / DSM 44827 / CIP 107346 / CN-1) (Corynebacterium nigricans).